Reading from the N-terminus, the 505-residue chain is Putative thymidine phosphorylase (505 aa).

Belongs to the thymidine/pyrimidine-nucleoside phosphorylase family. Type 2 subfamily.

It catalyses the reaction thymidine + phosphate = 2-deoxy-alpha-D-ribose 1-phosphate + thymine. In Hahella chejuensis (strain KCTC 2396), this protein is Putative thymidine phosphorylase.